The sequence spans 889 residues: Protein translocase subunit SecA (889 aa).

ATP contacts are provided by residues glutamine 87, 105–109, and aspartate 494; that span reads GEGKT. The segment at 823 to 889 is disordered; sequence ESLRPEEADL…RMDKDTKGKR (67 aa). Residues 867 to 889 are compositionally biased toward basic and acidic residues; it reads PRDDRPMNREERRRMDKDTKGKR.

It belongs to the SecA family. Monomer and homodimer. Part of the essential Sec protein translocation apparatus which comprises SecA, SecYEG and auxiliary proteins SecDF-YajC and YidC.

It is found in the cell inner membrane. Its subcellular location is the cytoplasm. It carries out the reaction ATP + H2O + cellular proteinSide 1 = ADP + phosphate + cellular proteinSide 2.. In terms of biological role, part of the Sec protein translocase complex. Interacts with the SecYEG preprotein conducting channel. Has a central role in coupling the hydrolysis of ATP to the transfer of proteins into and across the cell membrane, serving as an ATP-driven molecular motor driving the stepwise translocation of polypeptide chains across the membrane. This Bdellovibrio bacteriovorus (strain ATCC 15356 / DSM 50701 / NCIMB 9529 / HD100) protein is Protein translocase subunit SecA.